A 339-amino-acid polypeptide reads, in one-letter code: Sulfate/thiosulfate import ATP-binding protein CysA (339 aa).

Positions 3-237 (IAIRSVEKQF…PETAFVCGFV (235 aa)) constitute an ABC transporter domain. An ATP-binding site is contributed by 35–42 (GPSGSGKT).

The protein belongs to the ABC transporter superfamily. Sulfate/tungstate importer (TC 3.A.1.6) family. The complex is composed of two ATP-binding proteins (CysA), two transmembrane proteins (CysT and CysW) and a solute-binding protein (CysP).

The protein resides in the cell inner membrane. It carries out the reaction sulfate(out) + ATP + H2O = sulfate(in) + ADP + phosphate + H(+). It catalyses the reaction thiosulfate(out) + ATP + H2O = thiosulfate(in) + ADP + phosphate + H(+). In terms of biological role, part of the ABC transporter complex CysAWTP involved in sulfate/thiosulfate import. Responsible for energy coupling to the transport system. The sequence is that of Sulfate/thiosulfate import ATP-binding protein CysA from Caulobacter vibrioides (strain ATCC 19089 / CIP 103742 / CB 15) (Caulobacter crescentus).